The sequence spans 220 residues: N-(5'-phosphoribosyl)anthranilate isomerase (220 aa).

It belongs to the TrpF family.

It catalyses the reaction N-(5-phospho-beta-D-ribosyl)anthranilate = 1-(2-carboxyphenylamino)-1-deoxy-D-ribulose 5-phosphate. It participates in amino-acid biosynthesis; L-tryptophan biosynthesis; L-tryptophan from chorismate: step 3/5. This is N-(5'-phosphoribosyl)anthranilate isomerase from Leptothrix cholodnii (strain ATCC 51168 / LMG 8142 / SP-6) (Leptothrix discophora (strain SP-6)).